The following is a 2496-amino-acid chain: Hornerin (2496 aa).

The tract at residues 1 to 81 (MPKLLESIVT…TEYLLMILKL (81 aa)) is S-100-like. 2 consecutive EF-hand domains span residues 13 to 48 (DVFY…LKNP) and 49 to 84 (DDPD…LTKA). Positions 27, 32, 62, 64, 66, 68, and 73 each coordinate Ca(2+). A s (spacer) region spans residues 82–98 (TKACNKIIGKDYCQASG). A disordered region spans residues 97-2496 (SGSKQKNHSH…SGQTSGCGSG (2400 aa)). The stretch at 99-145 (SKQKNHSHQHQEEQSKKETENKEQKGSISSSAGENDSYSRGSRGSNK) is one 1; truncated repeat. A compositionally biased stretch (basic and acidic residues) spans 107 to 123 (QHQEEQSKKETENKEQK). The span at 124–134 (GSISSSAGEND) shows a compositional bias: polar residues. The span at 144–153 (NKSKSKKLRK) shows a compositional bias: basic residues. Tandem repeats lie at residues 146-231 (SKSK…NGKH), 232-321 (GSSS…FGSS), 326-400 (SGQS…SEQY), 401-491 (GASS…SCCG), 492-577 (QSSG…SGRY), 578-668 (GASS…SGSR), 669-748 (HGSG…SGRC), 749-839 (GASS…SCCG), 840-926 (QSSG…SGRY), 927-1017 (GASS…SGSR), 1018-1097 (HGSG…SGRC), 1098-1188 (GASS…SCCG), 1189-1274 (QSSG…SGRY), 1275-1365 (GASS…SGSR), 1366-1445 (HGSG…SGRC), 1446-1536 (GASS…SCCG), 1537-1622 (QSSG…SGRY), 1623-1713 (GASS…SGSR), 1714-1793 (HGSG…SGRC), 1794-1884 (GASS…SCCG), 1885-1970 (QSSG…SGRY), 1971-2061 (GASS…SGSR), 2062-2141 (HGSG…SGRC), 2142-2232 (GASS…SGSR), 2233-2312 (HGSG…SGRY), 2313-2403 (GASS…SGSR), and 2410-2496 (QFPI…CGSG). Composition is skewed to low complexity over residues 183 to 194 (SGFSNSSGNGRP), 200 to 246 (SGFP…SGHS), and 270 to 286 (RESS…SEEP). Polar residues-rich tracts occupy residues 294–319 (RKNS…QGFG) and 326–355 (SGQS…SSES). Low complexity-rich tracts occupy residues 362–379 (VSGS…STSG), 394–415 (SSGS…SGQS), and 423–448 (SGSR…QQFG). Gly residues predominate over residues 449 to 464 (SGSGRSSGFSQGGSGQ). Low complexity predominate over residues 465 to 565 (GRSSRGGQQG…GQTSSSTRQG (101 aa)). Phosphoserine is present on residues serine 506 and serine 508. Over residues 566-576 (SGQGQASGSGR) the composition is skewed to gly residues. Composition is skewed to low complexity over residues 577 to 593 (YGAS…GQST) and 600 to 625 (SGSR…QRYG). A compositionally biased stretch (gly residues) spans 626-641 (SGSGESSGFSQGGSGQ). 2 stretches are compositionally biased toward low complexity: residues 642-670 (GRSS…SRHG) and 679-713 (SGQQ…GSGS). Arginine 646 carries the post-translational modification Omega-N-methylarginine. Serine 716 carries the post-translational modification Phosphoserine. Residues 723-736 (GSTSGQTASSTRQG) are compositionally biased toward low complexity. The span at 737–747 (SGQGQASGSGR) shows a compositional bias: gly residues. 4 stretches are compositionally biased toward low complexity: residues 748–764 (CGAS…GQST), 771–796 (SGSR…QRFG), 804–884 (GFSQ…SRPA), and 891–914 (SGRS…TRQG). Serine 815 is modified (phosphoserine). The segment covering 915–925 (SGQGQASGSGR) has biased composition (gly residues). 2 stretches are compositionally biased toward low complexity: residues 926–942 (YGAS…GQST) and 949–974 (SGSR…QRYG). Residues 975 to 990 (SGSGESSGFSQGGSGQ) show a composition bias toward gly residues. Composition is skewed to low complexity over residues 991-1019 (GRSS…SRHG), 1028-1062 (SGQQ…GSGS), and 1072-1085 (GSTS…TRQG). Arginine 995 bears the Omega-N-methylarginine mark. Positions 1086-1096 (SGQGQASGSGR) are enriched in gly residues. 3 stretches are compositionally biased toward low complexity: residues 1097 to 1113 (CGAS…GQST), 1120 to 1145 (SGSR…QRFG), and 1153 to 1262 (GFSQ…TRQG). Serine 1229 bears the Phosphoserine mark. Over residues 1263–1273 (SGQGQASGSGR) the composition is skewed to gly residues. The segment covering 1281–1292 (TSGCRSGQSTRY) has biased composition (polar residues). Low complexity predominate over residues 1298–1322 (GSRNSSTQSRGRSTSRESSTSQRYG). The span at 1323 to 1338 (SGSGESSGFSQGGSGQ) shows a compositional bias: gly residues. Composition is skewed to low complexity over residues 1339 to 1367 (GRSS…SRHG), 1376 to 1410 (SGQQ…GSGS), and 1420 to 1433 (GSTS…TRQG). At arginine 1343 the chain carries Omega-N-methylarginine. Positions 1434–1444 (SGQGQASGSGR) are enriched in gly residues. Low complexity-rich tracts occupy residues 1445-1461 (CGAS…GQST), 1468-1493 (SGSR…QRFG), and 1501-1610 (GFSQ…TRQG). Residues serine 1551 and serine 1553 each carry the phosphoserine modification. The segment covering 1611-1621 (SGQGQASGSGR) has biased composition (gly residues). Low complexity-rich tracts occupy residues 1622-1631 (YGASSGQTSG) and 1645-1670 (SGSR…QRCG). Serine 1650 carries the phosphoserine modification. Residues 1671 to 1686 (SGSGESSGFSQGGSGQ) show a composition bias toward gly residues. Composition is skewed to low complexity over residues 1687 to 1715 (GRSS…SRHG), 1724 to 1758 (SGQQ…GSGS), and 1768 to 1781 (GSTS…TRQG). Position 1691 is an omega-N-methylarginine (arginine 1691). The span at 1782 to 1792 (SGQGQASGSGR) shows a compositional bias: gly residues. The segment covering 1800 to 1811 (TSGCGSDQSTRY) has biased composition (polar residues). 2 stretches are compositionally biased toward low complexity: residues 1816-1841 (SGSR…QRFG) and 1849-1958 (GFSQ…TRQG). Residues 1959–1969 (SGQGQASGSGR) show a composition bias toward gly residues. Low complexity-rich tracts occupy residues 1970–1986 (YGAS…GQST) and 1993–2018 (SGSR…QRYG). Serine 2011 is subject to Phosphoserine. A compositionally biased stretch (gly residues) spans 2019 to 2034 (SGSGESSGFSQGGSGQ). 2 stretches are compositionally biased toward low complexity: residues 2035 to 2063 (GRSS…SRHG) and 2072 to 2106 (SGQQ…GSGS). Position 2039 is an omega-N-methylarginine (arginine 2039). Residues serine 2109 and serine 2124 each carry the phosphoserine modification. The segment covering 2116–2129 (GSTSGQTASSTRQG) has biased composition (low complexity). A compositionally biased stretch (gly residues) spans 2130-2140 (SGQGQASGSGR). Composition is skewed to low complexity over residues 2141 to 2157 (CGAS…GQST) and 2164 to 2189 (SGSR…QRYG). Gly residues predominate over residues 2190-2205 (SGSGESSGFSQGGSGQ). Composition is skewed to low complexity over residues 2206-2234 (GRSS…SRHG) and 2243-2300 (SGQQ…TRQG). An Omega-N-methylarginine modification is found at arginine 2210. Gly residues predominate over residues 2301-2311 (SGQGQASGSGR). Low complexity-rich tracts occupy residues 2312 to 2328 (YGAS…GQST) and 2335 to 2360 (SGSR…QRYG). A Phosphoserine modification is found at serine 2353. A compositionally biased stretch (gly residues) spans 2361 to 2376 (SGSGESSGFSQGGSGQ). Composition is skewed to low complexity over residues 2377-2405 (GRSS…SRHG), 2414-2448 (SGQQ…GSGS), and 2458-2471 (GSTS…TRQG). The residue at position 2381 (arginine 2381) is an Omega-N-methylarginine. Residues 2472-2482 (SGQGQASGSGR) show a composition bias toward gly residues.

It belongs to the S100-fused protein family. The protein in the N-terminal section; belongs to the S-100 family. In terms of processing, processed during the process of epidermal differentiation. Post-translationally, forms covalent cross-links mediated by transglutaminase TGM3, between glutamine and the epsilon-amino group of lysine residues (in vitro). As to expression, embryonic skin. Highest level in the adult forestomach followed by the skin. Lower levels in the tongue, esophagus. Detected in the granular and cornified layers of the mature epidermis.

The protein localises to the cytoplasmic granule. Functionally, component of the epidermal cornified cell envelopes. In Mus musculus (Mouse), this protein is Hornerin (Hrnr).